We begin with the raw amino-acid sequence, 398 residues long: MTGQRATPQPTLDDLPLRDDLRGKSPYGAPQLAVPVRLNTNENPHPPSRALVDDVVRSVARAAADLHRYPDRDAVQLRSDLARYLTAQTGVQLGVENLWAANGSNEILQQLLQAFGGPGRSAIGFVPSYSMHPIISDGTRTEWLQAARADDFSLDVDAAVAAVTERTPDVVFVASPNNPSGQSVSLSGLRRLLDAAPGIVIVDEAYGEFSSQPSAVQLVGEYPTKLVVTRTMSKAFAFAGGRLGYLIATPAVIEAMLLVRLPYHLSSVTQAAARAALRHADDTLGSVAALIAERERVSTALTGMGFRVIPSDANFVLFGEFTDAPASWQRYLDAGVLIRDVGIPGYLRATTGLAEENDAFLRASAQLAATELAPVNVGAIASAAEPRAAGRDHVLGAP.

Over residues 1 to 10 the composition is skewed to polar residues; it reads MTGQRATPQP. The tract at residues 1 to 30 is disordered; that stretch reads MTGQRATPQPTLDDLPLRDDLRGKSPYGAP. K234 is modified (N6-(pyridoxal phosphate)lysine).

The protein belongs to the class-II pyridoxal-phosphate-dependent aminotransferase family. Histidinol-phosphate aminotransferase subfamily. In terms of assembly, homodimer. Pyridoxal 5'-phosphate serves as cofactor.

The catalysed reaction is L-histidinol phosphate + 2-oxoglutarate = 3-(imidazol-4-yl)-2-oxopropyl phosphate + L-glutamate. It participates in amino-acid biosynthesis; L-histidine biosynthesis; L-histidine from 5-phospho-alpha-D-ribose 1-diphosphate: step 7/9. The chain is Histidinol-phosphate aminotransferase from Mycobacterium avium (strain 104).